Here is a 520-residue protein sequence, read N- to C-terminus: Laccase-1 (520 aa).

Residues 1–21 (MSRFHSLLAFVVASLTAVAHA) form the signal peptide. 2 Plastocyanin-like domains span residues 23–148 (IGPV…FVVY) and 160–302 (VDND…ILRY). Residues N72 and N75 are each glycosylated (N-linked (GlcNAc...) asparagine). Cu cation-binding residues include H85, H87, H130, and H132. Cystine bridges form between C106–C509 and C138–C226. N-linked (GlcNAc...) asparagine glycosylation is found at N229, N238, N354, and N361. The Plastocyanin-like 3 domain maps to 369-491 (TVPVLLQIIS…AGFAVVFAED (123 aa)). Residues H416, H419, H421, H473, C474, H475, and H479 each contribute to the Cu cation site.

It belongs to the multicopper oxidase family. In terms of assembly, homodimer. The cofactor is Cu cation.

It localises to the secreted. The enzyme catalyses 4 hydroquinone + O2 = 4 benzosemiquinone + 2 H2O. Lignin degradation and detoxification of lignin-derived products. This is Laccase-1 from Trametes villosa (White-rot fungus).